Consider the following 120-residue polypeptide: Sirohydrochlorin cobaltochelatase (120 aa).

The active-site Proton acceptor is the His9. His9 is a binding site for Co(2+). Substrate contacts are provided by residues Gln43 and 68–73 (FAAGTH). His73 contributes to the Co(2+) binding site.

Belongs to the CbiX family. CbiXS subfamily. Homotetramer; dimer of dimers.

It catalyses the reaction Co-sirohydrochlorin + 2 H(+) = sirohydrochlorin + Co(2+). Its pathway is cofactor biosynthesis; adenosylcobalamin biosynthesis; cob(II)yrinate a,c-diamide from sirohydrochlorin (anaerobic route): step 1/10. Catalyzes the insertion of Co(2+) into sirohydrochlorin as part of the anaerobic pathway to cobalamin biosynthesis. The sequence is that of Sirohydrochlorin cobaltochelatase from Sulfurisphaera tokodaii (strain DSM 16993 / JCM 10545 / NBRC 100140 / 7) (Sulfolobus tokodaii).